Consider the following 536-residue polypeptide: Lipid scramblase CLPTM1L (536 aa).

Over 1–9 (MLSRSSFTS) the chain is Cytoplasmic. Residues 10–30 (LAVGVFAVYVAHTCWVMYGIV) traverse the membrane as a helical segment. Over 31-284 (YTRPCPSGGA…VKGIFVDTNL (254 aa)) the chain is Extracellular. 3 N-linked (GlcNAc...) asparagine glycosylation sites follow: Asn-92, Asn-102, and Asn-229. Residues 285–305 (YFLALTFFVAAFHLLFDFLAF) traverse the membrane as a helical segment. The Cytoplasmic segment spans residues 306-324 (KNDISFWKKKRSMIGMSTK). The helical transmembrane segment at 325-342 (AVLWRCFSTVVIFLFLLD) threads the bilayer. Residues 343 to 346 (EQTS) lie on the Extracellular side of the membrane. The chain crosses the membrane as a helical span at residues 347-364 (LLVLIPAGIGAVIELWKV). The Cytoplasmic segment spans residues 365 to 402 (KKALKMTVKWQGIRPKVQFGASNDSEKKTEEYDTQAMK). Residues 403 to 423 (YLSYLLYPLCIGGAAYSLLNV) traverse the membrane as a helical segment. The Extracellular segment spans residues 424-428 (KYKSW). A helical transmembrane segment spans residues 429–449 (YSWLINSFVNGVYAFGFLFML). Residues 450-536 (PQLFVNYKMK…YEEKPKKKSS (87 aa)) are Cytoplasmic-facing.

It belongs to the CLPTM1 family.

The protein resides in the endoplasmic reticulum membrane. The enzyme catalyses a 6-(alpha-D-glucosaminyl)-1-(1,2-diacyl-sn-glycero-3-phospho)-1D-myo-inositol(in) = a 6-(alpha-D-glucosaminyl)-1-(1,2-diacyl-sn-glycero-3-phospho)-1D-myo-inositol(out). The catalysed reaction is 6-(alpha-D-glucosaminyl)-(1-octadecanoyl,2-(9Z)-octadecenoyl-sn-glycero-3-phospho)-1D-myo-inositol(in) = 6-(alpha-D-glucosaminyl)-(1-octadecanoyl,2-(9Z)-octadecenoyl-sn-glycero-3-phospho)-1D-myo-inositol(out). It carries out the reaction a 1,2-diacyl-sn-glycero-3-phospho-(1D-myo-inositol)(in) = a 1,2-diacyl-sn-glycero-3-phospho-(1D-myo-inositol)(out). It catalyses the reaction a 1,2-diacyl-sn-glycero-3-phosphocholine(in) = a 1,2-diacyl-sn-glycero-3-phosphocholine(out). The enzyme catalyses a 1,2-diacyl-sn-glycero-3-phosphoethanolamine(in) = a 1,2-diacyl-sn-glycero-3-phosphoethanolamine(out). Functionally, scramblase that mediates the translocation of glucosaminylphosphatidylinositol (alpha-D-GlcN-(1-6)-(1,2-diacyl-sn-glycero-3-phospho)-1D-myo-inositol, GlcN-PI) across the endoplasmic reticulum (ER) membrane, from the cytosolic leaflet to the luminal leaflet of the ER membrane, where it participates in the biosynthesis of glycosylphosphatidylinositol (GPI). GPI is a lipid glycoconjugate involved in post-translational modification of proteins. Can also translocate 1,2-diacyl-sn-glycero-3-phospho-(1D-myo-inositol) (phosphatidylinositol or PI), as well as several other phospholipids (1,2-diacyl-sn-glycero-3-phosphocholine, 1,2-diacyl-sn-glycero-3-phosphoethanolamine), and N-acetylglucosaminylphosphatidylinositol (GlcNAc-PI) in vitro. The protein is Lipid scramblase CLPTM1L (CLPTM1L) of Gallus gallus (Chicken).